Reading from the N-terminus, the 286-residue chain is Shikimate dehydrogenase (NADP(+)) (286 aa).

Shikimate is bound by residues 22–24 and threonine 69; that span reads SFS. The active-site Proton acceptor is the lysine 73. Glutamate 85 is a binding site for NADP(+). 2 residues coordinate shikimate: asparagine 94 and aspartate 109. NADP(+)-binding positions include 133 to 137, 157 to 162, and leucine 231; these read GAGGA and NRTIDK. Tyrosine 233 contacts shikimate. Glycine 254 is an NADP(+) binding site.

The protein belongs to the shikimate dehydrogenase family. Homodimer.

The catalysed reaction is shikimate + NADP(+) = 3-dehydroshikimate + NADPH + H(+). The protein operates within metabolic intermediate biosynthesis; chorismate biosynthesis; chorismate from D-erythrose 4-phosphate and phosphoenolpyruvate: step 4/7. In terms of biological role, involved in the biosynthesis of the chorismate, which leads to the biosynthesis of aromatic amino acids. Catalyzes the reversible NADPH linked reduction of 3-dehydroshikimate (DHSA) to yield shikimate (SA). This is Shikimate dehydrogenase (NADP(+)) from Alkaliphilus oremlandii (strain OhILAs) (Clostridium oremlandii (strain OhILAs)).